Here is a 1203-residue protein sequence, read N- to C-terminus: MTKCRRRRLHLSNIYAFKGRKSNFQEDHSHIGGPGFSRVVYCNEPNSPAAERRNYVGNYVRSTKYTLASFIPKSLFEQFRRVANFYFLVTGVLSLTALSPYSPISALLPLTFVIAASMVKEAIEDWGRKKQDIEMNNRKVKVHDGNGIFRREGWRDLKVGNIVRVEKDEFFPADLLLLSSSYEDSICYVETMNLDGETNLKVKQGLEATSSALHEDSDFKELKAVVKCEDPNADLYTFVGTLHFEEQRLPLSITQLLLRDSKLRNTEYIYGVVVFTGHDTKVIQNSTDPPSKRSRIERKMDKIIYLMFGVVFLMSFIGSIVFGIETREDRVRNGGRTERWYLRPDNADIFFDPDRAPMAAVYHFFTAVMLYSYFIPISLYVSIEIVKVLQSLFINNDILMYYEENDKPAHARTSNLNEELGMVDTILSDKTGTLTCNSMEFIKCSIAGTAYGRGITEVERSMAMRSNGSSLVGDDLDVVVDQSGPKIKGFNFLDERVMKGNWVKQRDAAVLQKFFRLLAVCHTAIPETDEATGSVSYEAESPDEAAFVVAAREFGFEFFSRTQNGISFRELDLASGKTVERVYRLLNVLEFNSARKRMSVIVRDEDGRLLLLSKGADNVMFERLAKNGRKFEEKTREHVNEYADAGLRTLILAYREVDENEYIEFSKNFNEAKNSVTADRESLIDEITEQMERDLILLGATAVEDKLQNGVPDCIDKLAQAGIKIWVLTGDKMETAINIGFACSLLRQEMKQIIINLETPHIKALEKAGEKDAIEHASRESVVNQMEEGKALLTASSSASSHEAFALIIDGKSLTYALEDDFKKKFLDLATGCASVICCRSSPKQKALVTRLVKSGTGKTTLAIGDGANDVGMLQEADIGVGISGVEGMQAVMSSDIAIAQFRYLERLLLVHGHWCYSRISSMICYFFYKNITFGVTVFLYEAYTSFSAQPAYNDWFLSLFNVFFSSLPVIALGVFDQDVSARYCYKFPLLYQEGVQNLLFSWKRIIGWMFNGVFTALAIFFLCKESLKHQLYNPNGKTAGREILGGTMYTCVVWVVNLQMALAISYFTWLQHIVIWGSVAFWYIFLMIYGAITPSFSTDAYKVFIEALAPAPSYWLTTLFVMFFALIPFFVFKSVQMRFFPGYHQMIQWIRYEGHSNDPEFVEMVRQRSIRPTTVGFTARRAASVRRSGRFHDQLNKNFIAF.

Residues 1-71 are Cytoplasmic-facing; that stretch reads MTKCRRRRLH…STKYTLASFI (71 aa). The chain crosses the membrane as a helical span at residues 72–93; it reads PKSLFEQFRRVANFYFLVTGVL. Topologically, residues 94–97 are extracellular; the sequence is SLTA. Residues 98 to 120 traverse the membrane as a helical segment; it reads LSPYSPISALLPLTFVIAASMVK. Over 121–303 the chain is Cytoplasmic; the sequence is EAIEDWGRKK…SRIERKMDKI (183 aa). A helical membrane pass occupies residues 304 to 325; that stretch reads IYLMFGVVFLMSFIGSIVFGIE. Topologically, residues 326 to 363 are extracellular; it reads TREDRVRNGGRTERWYLRPDNADIFFDPDRAPMAAVYH. A helical transmembrane segment spans residues 364 to 381; the sequence is FFTAVMLYSYFIPISLYV. Over 382 to 921 the chain is Cytoplasmic; the sequence is SIEIVKVLQS…HGHWCYSRIS (540 aa). The active-site 4-aspartylphosphate intermediate is the Asp-429. Residues Asp-866 and Asp-870 each coordinate Mg(2+). Residues 922 to 941 traverse the membrane as a helical segment; sequence SMICYFFYKNITFGVTVFLY. The Extracellular segment spans residues 942–955; sequence EAYTSFSAQPAYND. The chain crosses the membrane as a helical span at residues 956–975; it reads WFLSLFNVFFSSLPVIALGV. At 976 to 1005 the chain is on the cytoplasmic side; that stretch reads FDQDVSARYCYKFPLLYQEGVQNLLFSWKR. The chain crosses the membrane as a helical span at residues 1006-1028; sequence IIGWMFNGVFTALAIFFLCKESL. At 1029 to 1041 the chain is on the extracellular side; sequence KHQLYNPNGKTAG. A helical membrane pass occupies residues 1042 to 1064; that stretch reads REILGGTMYTCVVWVVNLQMALA. Residues 1065–1070 are Cytoplasmic-facing; that stretch reads ISYFTW. Residues 1071 to 1091 form a helical membrane-spanning segment; the sequence is LQHIVIWGSVAFWYIFLMIYG. The Extracellular portion of the chain corresponds to 1092 to 1108; sequence AITPSFSTDAYKVFIEA. The chain crosses the membrane as a helical span at residues 1109–1133; that stretch reads LAPAPSYWLTTLFVMFFALIPFFVF. Residues 1134 to 1203 lie on the Cytoplasmic side of the membrane; it reads KSVQMRFFPG…DQLNKNFIAF (70 aa).

It belongs to the cation transport ATPase (P-type) (TC 3.A.3) family. Type IV subfamily.

The protein localises to the membrane. It catalyses the reaction ATP + H2O + phospholipidSide 1 = ADP + phosphate + phospholipidSide 2.. In terms of biological role, involved in transport of phospholipids. This chain is Probable phospholipid-transporting ATPase 11, found in Arabidopsis thaliana (Mouse-ear cress).